Here is a 195-residue protein sequence, read N- to C-terminus: Probable GTP-binding protein EngB (195 aa).

Residues 22 to 195 (GYPEIALVGR…WKWIEDRMGE (174 aa)) enclose the EngB-type G domain. GTP contacts are provided by residues 30-37 (GRSNVGKS), 57-61 (GKTQT), 75-78 (DVPG), 142-145 (TKSD), and 173-176 (MFSA). Mg(2+) contacts are provided by Ser-37 and Thr-59.

This sequence belongs to the TRAFAC class TrmE-Era-EngA-EngB-Septin-like GTPase superfamily. EngB GTPase family. Mg(2+) is required as a cofactor.

In terms of biological role, necessary for normal cell division and for the maintenance of normal septation. The chain is Probable GTP-binding protein EngB from Pediococcus pentosaceus (strain ATCC 25745 / CCUG 21536 / LMG 10740 / 183-1w).